The chain runs to 450 residues: MAQFFKAKPNSSKQLSAKLSLNVDQLDHLGAGIAQYQGKVVFIPGALPDETVTVQLTEQKKNYARAKLIKVDAQSPERVEPECPHYHTCGGCDLQHMSLSGQREHKEAALLDIMAKFAGTEGGALSPALTGEGWHYRRRARLATLFDKNTKHLSLGFRAASSSNVVPISQCQVLAKPLSDLIVPFAKLLNQLSAKASLGHLELIAADNGHFAVLRITKALNDKDLAKLSAFAEQHQIYICLQDNEGQFQGVGVELVLPVYQLLDENAQSDAVSLSFTPGNFVQVNSQINKAMVAQAMDWLAPAPDERILDLFCGMGNFSLPLAKMGADVIGVEGVAEMVSQARVNAKANNLDKLTFYHGDLSADLSLEPWMGKIDKLLLDPARAGAFESLQWLKKMKPRKVLYVSCNPASLARDSTVLLERGYRLQRLGLIDMFPQTHHIEAMALFELTK.

A TRAM domain is found at 12 to 70 (SKQLSAKLSLNVDQLDHLGAGIAQYQGKVVFIPGALPDETVTVQLTEQKKNYARAKLIK). 4 residues coordinate [4Fe-4S] cluster: Cys-83, Cys-89, Cys-92, and Cys-171. 6 residues coordinate S-adenosyl-L-methionine: Gln-283, Phe-312, Asn-317, Glu-333, Asp-360, and Asp-380. The active-site Nucleophile is Cys-406.

Belongs to the class I-like SAM-binding methyltransferase superfamily. RNA M5U methyltransferase family. RlmD subfamily.

The catalysed reaction is uridine(1939) in 23S rRNA + S-adenosyl-L-methionine = 5-methyluridine(1939) in 23S rRNA + S-adenosyl-L-homocysteine + H(+). Catalyzes the formation of 5-methyl-uridine at position 1939 (m5U1939) in 23S rRNA. The chain is 23S rRNA (uracil(1939)-C(5))-methyltransferase RlmD from Shewanella putrefaciens (strain CN-32 / ATCC BAA-453).